The primary structure comprises 510 residues: NAD(P)H-quinone oxidoreductase subunit 2 A, chloroplastic (510 aa).

The next 13 membrane-spanning stretches (helical) occupy residues 24 to 44 (LLLFDGSLIFPECILIFGLIL), 57 to 77 (IPWLYFISSTSLVMSITALLF), 99 to 119 (IFQFLILLCSTLCIPLSVEYI), 124 to 144 (MAITEFLLFVLTATLGGMFLC), 149 to 169 (LITIFVAPECFSLCSYLLSGY), 183 to 203 (YLLMGGASSSILVHGFSWLYG), 227 to 247 (PGISIALIFITVGIGFKLSPA), 295 to 315 (WHLLLEILAILSMILGNLIAI), 323 to 343 (MLAYSSIGQIGYVIIGIIVGD), 354 to 374 (YMLFYISMNLGTFACIVLFGL), 395 to 415 (ALSLALCLLSLGGLPPLAGFF), 418 to 438 (LYLFWCGWQAGLYFLVLIGLL), and 484 to 504 (MIVCVIASTIPGISMNPIIAI).

It belongs to the complex I subunit 2 family. NDH is composed of at least 16 different subunits, 5 of which are encoded in the nucleus.

The protein resides in the plastid. It is found in the chloroplast thylakoid membrane. The catalysed reaction is a plastoquinone + NADH + (n+1) H(+)(in) = a plastoquinol + NAD(+) + n H(+)(out). It carries out the reaction a plastoquinone + NADPH + (n+1) H(+)(in) = a plastoquinol + NADP(+) + n H(+)(out). Its function is as follows. NDH shuttles electrons from NAD(P)H:plastoquinone, via FMN and iron-sulfur (Fe-S) centers, to quinones in the photosynthetic chain and possibly in a chloroplast respiratory chain. The immediate electron acceptor for the enzyme in this species is believed to be plastoquinone. Couples the redox reaction to proton translocation, and thus conserves the redox energy in a proton gradient. The sequence is that of NAD(P)H-quinone oxidoreductase subunit 2 A, chloroplastic from Panax ginseng (Korean ginseng).